We begin with the raw amino-acid sequence, 183 residues long: Small ribosomal subunit protein uS5 (183 aa).

The region spanning 11–71 (FLERVVGINR…EEAKKSFFRV (61 aa)) is the S5 DRBM domain.

Belongs to the universal ribosomal protein uS5 family. Part of the 30S ribosomal subunit. Contacts proteins S4 and S8.

With S4 and S12 plays an important role in translational accuracy. Functionally, located at the back of the 30S subunit body where it stabilizes the conformation of the head with respect to the body. The polypeptide is Small ribosomal subunit protein uS5 (Micrococcus luteus (Micrococcus lysodeikticus)).